Reading from the N-terminus, the 196-residue chain is dITP/XTP pyrophosphatase (196 aa).

7–12 (TGNAGK) lines the substrate pocket. Glutamate 39 and aspartate 68 together coordinate Mg(2+). Aspartate 68 functions as the Proton acceptor in the catalytic mechanism. Residues serine 69, 153 to 156 (HGYD), lysine 176, and 181 to 182 (HR) contribute to the substrate site.

Belongs to the HAM1 NTPase family. In terms of assembly, homodimer. It depends on Mg(2+) as a cofactor.

It catalyses the reaction XTP + H2O = XMP + diphosphate + H(+). It carries out the reaction dITP + H2O = dIMP + diphosphate + H(+). The enzyme catalyses ITP + H2O = IMP + diphosphate + H(+). Pyrophosphatase that catalyzes the hydrolysis of nucleoside triphosphates to their monophosphate derivatives, with a high preference for the non-canonical purine nucleotides XTP (xanthosine triphosphate), dITP (deoxyinosine triphosphate) and ITP. Seems to function as a house-cleaning enzyme that removes non-canonical purine nucleotides from the nucleotide pool, thus preventing their incorporation into DNA/RNA and avoiding chromosomal lesions. The chain is dITP/XTP pyrophosphatase from Thioalkalivibrio sulfidiphilus (strain HL-EbGR7).